A 292-amino-acid chain; its full sequence is Cyclin-dependent kinase 5 (292 aa).

In terms of domain architecture, Protein kinase spans 4 to 286 (YEKLEKIGEG…AEEALQHPYF (283 aa)). Residues 10–18 (IGEGTYGTV) and Lys33 each bind ATP. Residue Tyr15 is modified to Phosphotyrosine; by ABL1, EPHA4 and FYN. Thr17 bears the Phosphothreonine mark. Lys56 is modified (N6-acetyllysine). Phosphoserine is present on Ser72. The active-site Proton acceptor is Asp126. A Phosphoserine modification is found at Ser159.

Belongs to the protein kinase superfamily. CMGC Ser/Thr protein kinase family. CDC2/CDKX subfamily. In terms of assembly, heterodimer composed of a catalytic subunit CDK5 and a regulatory subunit CDK5R1 (p25) and macromolecular complex composed of at least CDK5, CDK5R1 (p35) and CDK5RAP1 or CDK5RAP2 or CDK5RAP3. Only the heterodimer shows kinase activity. Under neurotoxic stress and neuronal injury conditions, p35 is cleaved by calpain to generate p25 that hyperactivates CDK5, that becomes functionally disabled and often toxic. Found in a trimolecular complex with CABLES1 and ABL1. Interacts with CABLES1 and CABLES2. Interacts with AATK and GSTP1. Binds to HDAC1 when in complex with p25. Interaction with myristoylation p35 promotes CDK5 association with membranes. Both isoforms 1 and 2 interacts with beta-catenin/CTNNB1. Interacts with delta-catenin/CTNND2 and APEX1. Interacts with P53/TP53 in neurons. Interacts with EPHA4; may mediate the activation of NGEF by EPHA4. Interacts with PTK2/FAK1. The complex p35/CDK5 interacts with CLOCK. Post-translationally, phosphorylation on Tyr-15 by ABL1 and FYN, and on Ser-159 by casein kinase 1 promotes kinase activity. By contrast, phosphorylation at Thr-14 inhibits activity. Phosphorylation at Ser-159 is essential for maximal catalytic activity.

Its subcellular location is the nucleus. The protein localises to the cytoplasm. It is found in the cell membrane. It localises to the perikaryon. The protein resides in the cell projection. Its subcellular location is the lamellipodium. The protein localises to the growth cone. It is found in the postsynaptic density. It localises to the synapse. It carries out the reaction L-seryl-[protein] + ATP = O-phospho-L-seryl-[protein] + ADP + H(+). It catalyses the reaction L-threonyl-[protein] + ATP = O-phospho-L-threonyl-[protein] + ADP + H(+). Inhibited by 2-(1-ethyl-2-hydroxyethylamino)-6-benzylamino-9-isopropylpurine (roscovitine), 1-isopropyl-4-aminobenzyl-6-ether-linked benzimidazoles, resveratrol, AT-7519 and olomoucine. Activated by CDK5R1 (p35) and CDK5R2 (p39) during the development of the nervous system; degradation of CDK5R1 (p35) and CDK5R2 (p39) by proteasome result in down regulation of kinase activity, during this process, CDK5 phosphorylates p35 and induces its ubiquitination and subsequent degradation. Kinase activity is mainly determined by the amount of p35 available and subcellular location; reversible association to plasma membrane inhibits activity. Long-term inactivation as well as CDK5R1 (p25)-mediated hyperactivation of CDK5 triggers cell death. The pro-death activity of hyperactivated CDK5 is suppressed by membrane association of CDK5, via myristoylation of p35. Brain-derived neurotrophic factor, glial-derived neurotrophic factor, nerve growth factor (NGF), retinoic acid, laminin and neuregulin promote activity. Neurotoxicity enhances nuclear activity, thus leading to MEF2 phosphorylation and inhibition prior to apoptosis of cortical neurons. Repression by GSTP1 via p25/p35 translocation prevents neurodegeneration. Proline-directed serine/threonine-protein kinase essential for neuronal cell cycle arrest and differentiation and may be involved in apoptotic cell death in neuronal diseases by triggering abortive cell cycle re-entry. Interacts with D1 and D3-type G1 cyclins. Phosphorylates SRC, NOS3, VIM/vimentin, p35/CDK5R1, MEF2A, SIPA1L1, SH3GLB1, PXN, PAK1, MCAM/MUC18, SEPT5, SYN1, DNM1, AMPH, SYNJ1, CDK16, RAC1, RHOA, CDC42, TONEBP/NFAT5, MAPT/TAU, MAP1B, histone H1, p53/TP53, HDAC1, APEX1, PTK2/FAK1, huntingtin/HTT, ATM, MAP2, NEFH and NEFM. Regulates several neuronal development and physiological processes including neuronal survival, migration and differentiation, axonal and neurite growth, synaptogenesis, oligodendrocyte differentiation, synaptic plasticity and neurotransmission, by phosphorylating key proteins. Negatively regulates the CACNA1B/CAV2.2 -mediated Ca(2+) release probability at hippocampal neuronal soma and synaptic terminals. Activated by interaction with CDK5R1 (p35) and CDK5R2 (p39), especially in postmitotic neurons, and promotes CDK5R1 (p35) expression in an autostimulation loop. Phosphorylates many downstream substrates such as Rho and Ras family small GTPases (e.g. PAK1, RAC1, RHOA, CDC42) or microtubule-binding proteins (e.g. MAPT/TAU, MAP2, MAP1B), and modulates actin dynamics to regulate neurite growth and/or spine morphogenesis. Also phosphorylates exocytosis associated proteins such as MCAM/MUC18, SEPT5, SYN1, and CDK16/PCTAIRE1 as well as endocytosis associated proteins such as DNM1, AMPH and SYNJ1 at synaptic terminals. In the mature central nervous system (CNS), regulates neurotransmitter movements by phosphorylating substrates associated with neurotransmitter release and synapse plasticity; synaptic vesicle exocytosis, vesicles fusion with the presynaptic membrane, and endocytosis. Promotes cell survival by activating anti-apoptotic proteins BCL2 and STAT3, and negatively regulating of JNK3/MAPK10 activity. Phosphorylation of p53/TP53 in response to genotoxic and oxidative stresses enhances its stabilization by preventing ubiquitin ligase-mediated proteasomal degradation, and induces transactivation of p53/TP53 target genes, thus regulating apoptosis. Phosphorylation of p35/CDK5R1 enhances its stabilization by preventing calpain-mediated proteolysis producing p25/CDK5R1 and avoiding ubiquitin ligase-mediated proteasomal degradation. During aberrant cell-cycle activity and DNA damage, p25/CDK5 activity elicits cell-cycle activity and double-strand DNA breaks that precedes neuronal death by deregulating HDAC1. DNA damage triggered phosphorylation of huntingtin/HTT in nuclei of neurons protects neurons against polyglutamine expansion as well as DNA damage mediated toxicity. Phosphorylation of PXN reduces its interaction with PTK2/FAK1 in matrix-cell focal adhesions (MCFA) during oligodendrocytes (OLs) differentiation. Negative regulator of Wnt/beta-catenin signaling pathway. Activator of the GAIT (IFN-gamma-activated inhibitor of translation) pathway, which suppresses expression of a post-transcriptional regulon of proinflammatory genes in myeloid cells; phosphorylates the linker domain of glutamyl-prolyl tRNA synthetase (EPRS) in a IFN-gamma-dependent manner, the initial event in assembly of the GAIT complex. Phosphorylation of SH3GLB1 is required for autophagy induction in starved neurons. Phosphorylation of TONEBP/NFAT5 in response to osmotic stress mediates its rapid nuclear localization. MEF2 is inactivated by phosphorylation in nucleus in response to neurotoxin, thus leading to neuronal apoptosis. APEX1 AP-endodeoxyribonuclease is repressed by phosphorylation, resulting in accumulation of DNA damage and contributing to neuronal death. NOS3 phosphorylation down regulates NOS3-derived nitrite (NO) levels. SRC phosphorylation mediates its ubiquitin-dependent degradation and thus leads to cytoskeletal reorganization. May regulate endothelial cell migration and angiogenesis via the modulation of lamellipodia formation. Involved in dendritic spine morphogenesis by mediating the EFNA1-EPHA4 signaling. The complex p35/CDK5 participates in the regulation of the circadian clock by modulating the function of CLOCK protein: phosphorylates CLOCK at 'Thr-451' and 'Thr-461' and regulates the transcriptional activity of the CLOCK-BMAL1 heterodimer in association with altered stability and subcellular distribution. The polypeptide is Cyclin-dependent kinase 5 (Bos taurus (Bovine)).